The sequence spans 304 residues: Ferredoxin fas2 (304 aa).

The 4Fe-4S ferredoxin-type domain occupies 2–29 (KVVVNERRCFGSGQCVLVAPEVFEQSND). Cysteine 10, cysteine 16, and cysteine 54 together coordinate [3Fe-4S] cluster. The interval 66–304 (MRQEPTEFSY…QSARSSIQQR (239 aa)) is transketolase-like.

This sequence in the C-terminal section; belongs to the transketolase family. Requires [3Fe-4S] cluster as cofactor.

Its function is as follows. Plays a role in electron transfer. The fas operon encodes genes involved in cytokinin production and in host plant fasciation (leafy gall). This is Ferredoxin fas2 (fas2) from Rhodococcoides fascians (Rhodococcus fascians).